The sequence spans 149 residues: MERTYLMVKPDGVQRGLIGQIISKFEQKGYKIVGLKMMQISREVAERHYGEHAGKPFFNGLVDFITSGPVVAMVIEGKDVVTTAREMMGATNPLKAAPGTIRATFGVDVGRNIIHGSDSLESAQREIGIFFKSEELIDYDRAIDTWIYE.

Lysine 9, phenylalanine 57, arginine 85, threonine 91, arginine 102, and asparagine 112 together coordinate ATP. Residue histidine 115 is the Pros-phosphohistidine intermediate of the active site.

Belongs to the NDK family. In terms of assembly, homotetramer. Mg(2+) is required as a cofactor.

It localises to the cytoplasm. It catalyses the reaction a 2'-deoxyribonucleoside 5'-diphosphate + ATP = a 2'-deoxyribonucleoside 5'-triphosphate + ADP. It carries out the reaction a ribonucleoside 5'-diphosphate + ATP = a ribonucleoside 5'-triphosphate + ADP. Major role in the synthesis of nucleoside triphosphates other than ATP. The ATP gamma phosphate is transferred to the NDP beta phosphate via a ping-pong mechanism, using a phosphorylated active-site intermediate. The chain is Nucleoside diphosphate kinase from Desulforamulus reducens (strain ATCC BAA-1160 / DSM 100696 / MI-1) (Desulfotomaculum reducens).